A 211-amino-acid chain; its full sequence is Small ribosomal subunit protein uS3 (211 aa).

The region spanning 38 to 106 (LRSFVKKTFH…EVELHIVEVK (69 aa)) is the KH type-2 domain.

This sequence belongs to the universal ribosomal protein uS3 family. As to quaternary structure, part of the 30S ribosomal subunit. Forms a tight complex with proteins S10 and S14.

Binds the lower part of the 30S subunit head. Binds mRNA in the 70S ribosome, positioning it for translation. The chain is Small ribosomal subunit protein uS3 from Anaplasma phagocytophilum (strain HZ).